The following is a 331-amino-acid chain: B-box zinc finger protein 21 (331 aa).

Residues Cys5, Cys8, Cys28, His34, Cys60, Cys63, Cys83, and His93 each contribute to the Zn(2+) site. The B box-type 1; atypical zinc finger occupies 5 to 47 (CDVCDKEEASVFCTADEASLCGGCDHQVHHANKLASKHLRFSL). Residues 60-102 (CDICQDKKALLFCQQDRAILCKDCDSSIHAANEHTKKHDRFLL) form a B box-type 2; atypical zinc finger. 2 stretches are compositionally biased toward low complexity: residues 115–126 (KPTSKSSSSSSS) and 228–238 (NNNNNNNNNNN). 2 disordered regions span residues 115-167 (KPTS…GGDA) and 209-241 (DDDG…NTVS).

Interacts with COP1, HY5 and BBX32. Interacts with FLZ1.

It localises to the nucleus. Functionally, transcription activator that acts as a positive regulator of seedling photomorphogenesis. Acts downstream of COP1 and play an important role in early and long-term adjustment of the shade avoidance syndrome (SAS) responses in natural environments. This is B-box zinc finger protein 21 from Arabidopsis thaliana (Mouse-ear cress).